We begin with the raw amino-acid sequence, 214 residues long: Cytochrome b (214 aa).

The next 4 membrane-spanning stretches (helical) occupy residues 31–51 (FGSMLLTCLVIQIMTGFFLAF), 75–96 (WIMQNTHAIGASLFFICIYIHI), 111–131 (WVSGTTLLILLMATAFFGYVL), and 176–196 (FFALHFILPFTIISASSIHIL). Positions 81 and 95 each coordinate heme b. Heme b is bound by residues His-180 and His-194. His-199 contacts a ubiquinone.

Belongs to the cytochrome b family. The cytochrome bc1 complex contains 3 respiratory subunits (MT-CYB, CYC1 and UQCRFS1), 2 core proteins (UQCRC1 and UQCRC2) and probably 6 low-molecular weight proteins. Heme b is required as a cofactor.

The protein localises to the mitochondrion inner membrane. Functionally, component of the ubiquinol-cytochrome c reductase complex (complex III or cytochrome b-c1 complex) that is part of the mitochondrial respiratory chain. The b-c1 complex mediates electron transfer from ubiquinol to cytochrome c. Contributes to the generation of a proton gradient across the mitochondrial membrane that is then used for ATP synthesis. This chain is Cytochrome b (MT-CYB), found in Gloydius blomhoffii (Mamushi).